The primary structure comprises 1281 residues: MPAALGLLLPWLSLVGALQPGLEPPQSDPTEAGAVFFASEYNSTAEIVLFRSVSASWEYNTNLTTANAALQVEASLEEQNFTELWGKKAKELYGNIWSNFSDPQLKKIIGSIQTLGPSNLPLDKRQQYNTILSDMDKIYSTAKVCLDNGTCWDLEPDISDIMATSRSYKKLLYAWEGWHNAAGNPLRAKYQEFVTLSNEAYQMDGFEDTGSYWRSWYDSTTFEDDLEHLYNQLEPLYLNLHAFVRRKLYDRYGPKYINLKGPIPAHLLGNMWAQQWNNIYDLMVPYPDKPNLDVTNTMVNQGWNATHMFRVSEEFFTSLGLLEMPPEFWEKSMLEKPADGREVVCHASAWDFYNRKDFRIKQCTTVTMEQLFTVHHEMGHVQYYLQYKDQPVSFRGGANPGFHEAIGDVLSLSVSTPSHLQKIGLLSSAVEDEESNINYLLKMALEKIAFLPFGYLIDQWRWNVFSGRTPPSRYNYDWWYLRTKYQGICAPVSRNESNFDPGAKYHIPGNTPYIRYFVSFILQFQFHKALCQAANHTGPLHTCDIYMSKEAGAKLREVLKAGSSKSWQEILFNLTGTDKMDAGALLEYFSPVTTWLQEQNNKTNEVLGWPEFDWRPPIPEGYPEGIDKIVDEAQAKEFLSEYNSTAEVVWNAYTEASWEYNTNITDHNKEVMLEKNLAMSKHTIEYGMRARQFDPSDFQDETVTRILNKLSVLERAALPEDELKEYNTLLSDMETTYSVAKVCRENNTCHPLDPDLTDILATSRDYNELLFAWKGWRDASGAKIKDKYKRYVELSNKAAVLNGYTDNGAYWRSLYETPTFEEDLERLYLQLQPLYLNLHAYVRRALYNKYGAEHISLKGPIPAHLLGNMWAQSWSNIFDLVMPFPDATKVDATPAMKQQGWTPKMMFEESDRFFTSLGLIPMPQEFWDKSMIEKPADGREVVCHASAWDFYNRKDFRIKQCTVVNMDDLITVHHEMGHVQYFLQYMDQPISFRDGANPGFHEAIGDVMALSVSTPKHLHSINLLDQVTENEESDINYLMSIALDKIAFLPFGYLMDQWRWKVFDGRIKEDEYNQQWWNLRLKYQGLCPPVPRSEDDFDPGAKFHIPANVPYIRYFVSFVIQFQFHQALCKAAGHTGPLHTCDIYQSKEAGKLLGDAMKLGFSKPWPEAMQLITGQPNMSAEALMSYFEPLMTWLVKKNTENGEVLGWPEYSWTPYAVTEFHAATDTADFLGMSVGTKQATAGAWVLLALALVFLITSIFLGVKLFSSRRKAFKSSSEMELK.

A signal peptide spans 1–17 (MPAALGLLLPWLSLVGA). Over 18–1241 (LQPGLEPPQS…MSVGTKQATA (1224 aa)) the chain is Extracellular. Peptidase M2 domains follow at residues 28–610 (DPTE…LGWP) and 629–1208 (IVDE…LGWP). N-linked (GlcNAc...) asparagine glycans are attached at residues Asn42, Asn62, Asn80, Asn99, and Asn148. Cysteines 145 and 151 form a disulfide. Tyr217 contributes to the chloride binding site. Asn304 carries N-linked (GlcNAc...) asparagine glycosylation. A disulfide bridge connects residues Cys345 and Cys363. His376 contacts Zn(2+). The active-site Proton acceptor 1 is Glu377. Positions 380 and 404 each coordinate Zn(2+). Asn495 carries N-linked (GlcNAc...) asparagine glycosylation. His506 functions as the Proton donor 1 in the catalytic mechanism. Arg515 is a binding site for chloride. Cys531 and Cys543 are oxidised to a cystine. N-linked (GlcNAc...) asparagine glycans are attached at residues Asn535, Asn573, Asn601, Asn643, Asn663, and Asn746. Cys743 and Cys749 are joined by a disulfide. 2 residues coordinate chloride: Arg777 and Tyr815. Cysteines 943 and 961 form a disulfide. Residue His974 participates in Zn(2+) binding. Residue Glu975 is the Proton acceptor 2 of the active site. Positions 978 and 1002 each coordinate Zn(2+). Chloride is bound by residues Trp1076 and Arg1080. Residue His1104 is the Proton donor 2 of the active site. Arg1113 contacts chloride. The cysteines at positions 1129 and 1141 are disulfide-linked. N-linked (GlcNAc...) asparagine glycosylation occurs at Asn1177. Positions 1201–1240 (NGEVLGWPEYSWTPYAVTEFHAATDTADFLGMSVGTKQAT) are juxtamembrane stalk. Residues 1242–1262 (GAWVLLALALVFLITSIFLGV) form a helical membrane-spanning segment. Topologically, residues 1263 to 1281 (KLFSSRRKAFKSSSEMELK) are cytoplasmic.

It belongs to the peptidase M2 family. It depends on Zn(2+) as a cofactor. Chloride serves as cofactor.

The protein resides in the cell membrane. The protein localises to the cytoplasm. The enzyme catalyses Release of a C-terminal dipeptide, oligopeptide-|-Xaa-Yaa, when Xaa is not Pro, and Yaa is neither Asp nor Glu. Thus, conversion of angiotensin I to angiotensin II, with increase in vasoconstrictor activity, but no action on angiotensin II.. It catalyses the reaction angiotensin I + H2O = L-histidyl-L-leucine + angiotensin II. The catalysed reaction is bradykinin + H2O = L-Phe-L-Arg + bradykinin(1-7). It carries out the reaction substance P + H2O = substance P(1-9) + L-Leu-L-Met-NH2. The enzyme catalyses substance P + H2O = substance P(1-8) + Gly-L-Leu-L-Met-NH2. It catalyses the reaction substance P + H2O = L-Phe-L-Phe-Gly-L-Leu-L-Met-NH2 + substance P(1-6). The catalysed reaction is neurotensin + H2O = neurotensin(1-11) + L-isoleucyl-L-leucine. It carries out the reaction goralatide + H2O = N-acetyl-L-seryl-L-aspartate + L-lysyl-L-proline. The enzyme catalyses Met-enkephalin + H2O = L-phenylalanyl-L-methionine + L-tyrosylglycylglycine. It catalyses the reaction Leu-enkephalin + H2O = L-tyrosylglycylglycine + L-phenylalanyl-L-leucine. The catalysed reaction is Met-enkephalin-Arg-Phe + H2O = L-arginyl-L-phenylalanine + Met-enkephalin. Functionally, dipeptidyl carboxypeptidase that removes dipeptides from the C-terminus of a variety of circulating hormones, such as angiotensin I, bradykinin or enkephalins, thereby playing a key role in the regulation of blood pressure, electrolyte homeostasis or synaptic plasticity. Composed of two similar catalytic domains, each possessing a functional active site, with different selectivity for substrates. Plays a major role in the angiotensin-renin system that regulates blood pressure and sodium retention by the kidney by converting angiotensin I to angiotensin II, resulting in an increase of the vasoconstrictor activity of angiotensin. Also able to inactivate bradykinin, a potent vasodilator, and therefore enhance the blood pressure response. Acts as a regulator of synaptic transmission by mediating cleavage of neuropeptide hormones, such as substance P, neurotensin or enkephalins. Catalyzes degradation of different enkephalin neuropeptides (Met-enkephalin, Leu-enkephalin, Met-enkephalin-Arg-Phe and possibly Met-enkephalin-Arg-Gly-Leu). Also acts as a regulator of hematopoietic stem cell differentiation by mediating degradation of hemoregulatory peptide N-acetyl-SDKP (AcSDKP). This Gallus gallus (Chicken) protein is Angiotensin-converting enzyme.